The following is a 417-amino-acid chain: MTEKENLGGSTLLPAYFGEFGGQFVAESLLPALDQLEKAFVDATNSPEFREELGGYLRDYLGRPTPLTECSNLPLSGEGKGFARIFLKREDLVHGGAHKTNQVIGQVLLAKRMGKTRIIAETGAGQHGTATALACALMGLECVVYMGAKDVARQQPNVYRMQLHGAKVIPVESGSGTLKDAVNEALRDWTATFHESHYLLGTAAGPHPFPTIVREFHKVISEEAKAQMLERTGKLPDVVVACVGGGSNAIGMFADFIDDEGVELVGAEPAGEGLDSGKHGATITNGQIGILHGTRSYLMRNSDGQVEESYSISAGLDYPGVGPQHAHLHATGRATYVGITDAEALQAFQYLARYEGIIPALESSHAFAYALKRAKTAEEEGQNLTILVSLSGRGDKDVDHVRRTLEENPELILKDNR.

Lys-99 carries the post-translational modification N6-(pyridoxal phosphate)lysine.

It belongs to the TrpB family. As to quaternary structure, tetramer of two alpha and two beta chains. Pyridoxal 5'-phosphate serves as cofactor.

The catalysed reaction is (1S,2R)-1-C-(indol-3-yl)glycerol 3-phosphate + L-serine = D-glyceraldehyde 3-phosphate + L-tryptophan + H2O. The protein operates within amino-acid biosynthesis; L-tryptophan biosynthesis; L-tryptophan from chorismate: step 5/5. Functionally, the beta subunit is responsible for the synthesis of L-tryptophan from indole and L-serine. This Corynebacterium glutamicum (strain R) protein is Tryptophan synthase beta chain.